The sequence spans 421 residues: Gamma-glutamyl phosphate reductase (421 aa).

The protein belongs to the gamma-glutamyl phosphate reductase family.

Its subcellular location is the cytoplasm. It carries out the reaction L-glutamate 5-semialdehyde + phosphate + NADP(+) = L-glutamyl 5-phosphate + NADPH + H(+). It functions in the pathway amino-acid biosynthesis; L-proline biosynthesis; L-glutamate 5-semialdehyde from L-glutamate: step 2/2. In terms of biological role, catalyzes the NADPH-dependent reduction of L-glutamate 5-phosphate into L-glutamate 5-semialdehyde and phosphate. The product spontaneously undergoes cyclization to form 1-pyrroline-5-carboxylate. This Nitrosospira multiformis (strain ATCC 25196 / NCIMB 11849 / C 71) protein is Gamma-glutamyl phosphate reductase.